The chain runs to 147 residues: Large ribosomal subunit protein uL16 (147 aa).

Residues 1–16 (MLMPKRVKRRRVHRGR) are compositionally biased toward basic residues. Positions 1-20 (MLMPKRVKRRRVHRGRMTGQ) are disordered.

It belongs to the universal ribosomal protein uL16 family. As to quaternary structure, part of the 50S ribosomal subunit.

Functionally, binds 23S rRNA and is also seen to make contacts with the A and possibly P site tRNAs. This Alkaliphilus metalliredigens (strain QYMF) protein is Large ribosomal subunit protein uL16.